The following is a 151-amino-acid chain: Sec-independent protein translocase protein TatB (151 aa).

A helical transmembrane segment spans residues 1 to 21; sequence MFGMSLPEIIIIAVIAVIFLG. Residues 120 to 131 are compositionally biased toward low complexity; it reads NNDPLNNETLNE. The segment at 120-151 is disordered; it reads NNDPLNNETLNEQPSKPSPNLNLENKEIKKEA. Residues 132 to 142 are compositionally biased toward polar residues; the sequence is QPSKPSPNLNL.

This sequence belongs to the TatB family. In terms of assembly, the Tat system comprises two distinct complexes: a TatABC complex, containing multiple copies of TatA, TatB and TatC subunits, and a separate TatA complex, containing only TatA subunits. Substrates initially bind to the TatABC complex, which probably triggers association of the separate TatA complex to form the active translocon.

It is found in the cell inner membrane. Part of the twin-arginine translocation (Tat) system that transports large folded proteins containing a characteristic twin-arginine motif in their signal peptide across membranes. Together with TatC, TatB is part of a receptor directly interacting with Tat signal peptides. TatB may form an oligomeric binding site that transiently accommodates folded Tat precursor proteins before their translocation. The sequence is that of Sec-independent protein translocase protein TatB from Campylobacter fetus subsp. fetus (strain 82-40).